The following is a 505-amino-acid chain: 2,3-bisphosphoglycerate-independent phosphoglycerate mutase (505 aa).

Mn(2+)-binding residues include aspartate 11 and serine 61. The active-site Phosphoserine intermediate is serine 61. Substrate-binding positions include histidine 122, 152–153 (RD), arginine 184, arginine 190, 258–261 (RPDR), and lysine 331. Mn(2+) is bound by residues aspartate 396, histidine 400, aspartate 437, histidine 438, and histidine 455.

Belongs to the BPG-independent phosphoglycerate mutase family. In terms of assembly, monomer. Mn(2+) is required as a cofactor.

It catalyses the reaction (2R)-2-phosphoglycerate = (2R)-3-phosphoglycerate. It functions in the pathway carbohydrate degradation; glycolysis; pyruvate from D-glyceraldehyde 3-phosphate: step 3/5. In terms of biological role, catalyzes the interconversion of 2-phosphoglycerate and 3-phosphoglycerate. In Mesomycoplasma hyopneumoniae (strain 7448) (Mycoplasma hyopneumoniae), this protein is 2,3-bisphosphoglycerate-independent phosphoglycerate mutase.